Here is a 527-residue protein sequence, read N- to C-terminus: Laccase-5 (527 aa).

A signal peptide spans 1-23; sequence MGKYHSFVNVVALSLSLSGRVFG. Positions 25–150 constitute a Plastocyanin-like 1 domain; the sequence is IGPVTDLTIS…DGLRGPLVVY (126 aa). Residues Asn-74 and Asn-77 are each glycosylated (N-linked (GlcNAc...) asparagine). His-87, His-89, His-132, and His-134 together coordinate Cu cation. 2 disulfides stabilise this stretch: Cys-108/Cys-516 and Cys-140/Cys-230. N-linked (GlcNAc...) asparagine glycans are attached at residues Asn-156, Asn-209, Asn-233, Asn-242, Asn-276, Asn-317, Asn-358, Asn-366, Asn-393, and Asn-402. Positions 162–306 constitute a Plastocyanin-like 2 domain; that stretch reads VDDDTTVITL…GGVNSAILRY (145 aa). The Plastocyanin-like 3 domain maps to 373-498; that stretch reads TVPVLLQILS…AGFAIVWGED (126 aa). Residues His-425, His-428, His-430, His-480, Cys-481, His-482, and His-486 each contribute to the Cu cation site.

The protein belongs to the multicopper oxidase family. As to quaternary structure, homodimer. Cu cation serves as cofactor.

It localises to the secreted. The catalysed reaction is 4 hydroquinone + O2 = 4 benzosemiquinone + 2 H2O. Its function is as follows. Lignin degradation and detoxification of lignin-derived products. This chain is Laccase-5 (LCC5), found in Trametes villosa (White-rot fungus).